The sequence spans 194 residues: MKLLQHLTLIFCLLILTACSSRQQQPDNTNWRQQREKLESVTHWTISGKLAIITPEKKGSVRIRWQQNGDDYHLNLTSLLGTRVMEMRKTGEQIVIIDDKGQEYRGTDAEYLVYRLTGWQMPVYKLPMWIKGLPGDTDYQINPNGQVTQIKTAQWQMQYQTYQPVDGWMMPENITFKGQQTELRLVINEWKLAK.

Residues 1–18 (MKLLQHLTLIFCLLILTA) form the signal peptide. Cys19 is lipidated: N-palmitoyl cysteine. The S-diacylglycerol cysteine moiety is linked to residue Cys19.

The protein belongs to the LolB family. As to quaternary structure, monomer.

Its subcellular location is the cell outer membrane. Its function is as follows. Plays a critical role in the incorporation of lipoproteins in the outer membrane after they are released by the LolA protein. This is Outer-membrane lipoprotein LolB from Tolumonas auensis (strain DSM 9187 / NBRC 110442 / TA 4).